Reading from the N-terminus, the 95-residue chain is Large ribosomal subunit protein uL22c (95 aa).

The protein belongs to the universal ribosomal protein uL22 family. Part of the 50S ribosomal subunit.

The protein resides in the plastid. Its subcellular location is the chloroplast. Its function is as follows. This protein binds specifically to 23S rRNA. In terms of biological role, the globular domain of the protein is located near the polypeptide exit tunnel on the outside of the subunit, while an extended beta-hairpin is found that lines the wall of the exit tunnel in the center of the 70S ribosome. The protein is Large ribosomal subunit protein uL22c (rpl22) of Cyanidioschyzon merolae (strain NIES-3377 / 10D) (Unicellular red alga).